We begin with the raw amino-acid sequence, 271 residues long: MIGKLSLLLVCVAVASGNPAAGKPWHWKSPKPLVDPRIHVNATPRIVGGVEATPHSWPHQAALFIDDMYFCGGSLISSEWVLTAAHCMDGAGFVEVVLGAHNIRQNEASQVSITSTDFFTHENWNSWLLTNDIALIKLPSPVSLNSNIKTVKLPSSDVAVGTTVTPTGWGRPLDSAGGISDVLRQVDVPIMTNDDCDAVYGIVGNGVVCIDSEGGKGTCNGDSGGPLNLNGMTYGITSFGSSAGCEVGYPDAFTRVYYYLDWIEQKTGVTP.

An N-terminal signal peptide occupies residues 1–15 (MIGKLSLLLVCVAVA). A propeptide spans 16 to 45 (SGNPAAGKPWHWKSPKPLVDPRIHVNATPR) (activation peptide). The Peptidase S1 domain occupies 46 to 268 (IVGGVEATPH…YLDWIEQKTG (223 aa)). C71 and C87 are disulfide-bonded. Active-site charge relay system residues include H86 and D132. 2 disulfides stabilise this stretch: C196–C209 and C219–C245. S223 functions as the Charge relay system in the catalytic mechanism.

It belongs to the peptidase S1 family.

Its subcellular location is the secreted. It localises to the extracellular space. The catalysed reaction is Preferential cleavage: Tyr-|-Xaa, Trp-|-Xaa, Phe-|-Xaa, Leu-|-Xaa.. Serine protease with chymotryptic and collagenolytic activities. The protein is Chymotrypsin BII of Penaeus vannamei (Whiteleg shrimp).